The sequence spans 568 residues: 2-succinyl-5-enolpyruvyl-6-hydroxy-3-cyclohexene-1-carboxylate synthase (568 aa).

It belongs to the TPP enzyme family. MenD subfamily. As to quaternary structure, homodimer. Requires Mg(2+) as cofactor. Mn(2+) is required as a cofactor. It depends on thiamine diphosphate as a cofactor.

It carries out the reaction isochorismate + 2-oxoglutarate + H(+) = 5-enolpyruvoyl-6-hydroxy-2-succinyl-cyclohex-3-ene-1-carboxylate + CO2. It functions in the pathway quinol/quinone metabolism; 1,4-dihydroxy-2-naphthoate biosynthesis; 1,4-dihydroxy-2-naphthoate from chorismate: step 2/7. It participates in quinol/quinone metabolism; menaquinone biosynthesis. Its function is as follows. Catalyzes the thiamine diphosphate-dependent decarboxylation of 2-oxoglutarate and the subsequent addition of the resulting succinic semialdehyde-thiamine pyrophosphate anion to isochorismate to yield 2-succinyl-5-enolpyruvyl-6-hydroxy-3-cyclohexene-1-carboxylate (SEPHCHC). This chain is 2-succinyl-5-enolpyruvyl-6-hydroxy-3-cyclohexene-1-carboxylate synthase, found in Actinobacillus succinogenes (strain ATCC 55618 / DSM 22257 / CCUG 43843 / 130Z).